The chain runs to 317 residues: Enoyl-CoA delta isomerase 3, peroxisomal (317 aa).

In terms of domain architecture, ACB spans 1–46; sequence MPKPGVFNFVNKATWDARNALGSLPKETARKNYVDLVSSLSSSSEA. Residues 40–60 form a disordered region; sequence LSSSSEAPSQGKRGADEKARE. 120-124 is a binding site for substrate; sequence SGNDL. Positions 315–317 match the Microbody targeting signal motif; sequence AKL.

The protein belongs to the enoyl-CoA hydratase/isomerase family. As to expression, expressed at high levels in the kidney. Also detected at very low levels in the duodenum, jejunum, ileum, heart, liver, lung, and brown adipose tissue (at protein level). In the kidney, expression seems to be localized mainly to the proximal tubule.

It is found in the peroxisome. It catalyses the reaction a (3Z)-enoyl-CoA = a 4-saturated (2E)-enoyl-CoA. The catalysed reaction is a (3E)-enoyl-CoA = a 4-saturated (2E)-enoyl-CoA. The enzyme catalyses (3E)-nonenoyl-CoA = (2E)-nonenoyl-CoA. Functionally, catalyzes the isomerization of trans-3-nonenoyl-CoA into trans-2-nonenoyl-CoA. May also have activity towards other enoyl-CoA species. The protein is Enoyl-CoA delta isomerase 3, peroxisomal of Mus musculus (Mouse).